Reading from the N-terminus, the 110-residue chain is Integration host factor subunit alpha (110 aa).

It belongs to the bacterial histone-like protein family. As to quaternary structure, heterodimer of an alpha and a beta chain.

This protein is one of the two subunits of integration host factor, a specific DNA-binding protein that functions in genetic recombination as well as in transcriptional and translational control. The chain is Integration host factor subunit alpha from Bdellovibrio bacteriovorus (strain ATCC 15356 / DSM 50701 / NCIMB 9529 / HD100).